The primary structure comprises 430 residues: Adenylosuccinate synthetase (430 aa).

Residues 13-19 (GDEGKGK) and 41-43 (GHT) each bind GTP. The active-site Proton acceptor is Asp-14. Residues Asp-14 and Gly-41 each contribute to the Mg(2+) site. IMP-binding positions include 14-17 (DEGK), 39-42 (NAGH), Thr-130, Arg-144, Gln-225, Thr-240, and Arg-304. His-42 serves as the catalytic Proton donor. A substrate-binding site is contributed by 300-306 (ATTGRAR). Residues Arg-306, 332-334 (KLD), and 414-416 (STG) each bind GTP.

This sequence belongs to the adenylosuccinate synthetase family. Homodimer. Mg(2+) is required as a cofactor.

The protein localises to the cytoplasm. The catalysed reaction is IMP + L-aspartate + GTP = N(6)-(1,2-dicarboxyethyl)-AMP + GDP + phosphate + 2 H(+). Its pathway is purine metabolism; AMP biosynthesis via de novo pathway; AMP from IMP: step 1/2. Functionally, plays an important role in the de novo pathway of purine nucleotide biosynthesis. Catalyzes the first committed step in the biosynthesis of AMP from IMP. This chain is Adenylosuccinate synthetase, found in Pseudomonas aeruginosa (strain LESB58).